We begin with the raw amino-acid sequence, 132 residues long: D-ribose pyranase (132 aa).

Catalysis depends on His20, which acts as the Proton donor. Residues Asp28, His99, and 121–123 contribute to the substrate site; that span reads YSN.

It belongs to the RbsD / FucU family. RbsD subfamily. Homodecamer.

The protein localises to the cytoplasm. It carries out the reaction beta-D-ribopyranose = beta-D-ribofuranose. It participates in carbohydrate metabolism; D-ribose degradation; D-ribose 5-phosphate from beta-D-ribopyranose: step 1/2. Functionally, catalyzes the interconversion of beta-pyran and beta-furan forms of D-ribose. The polypeptide is D-ribose pyranase (Streptococcus agalactiae serotype III (strain NEM316)).